We begin with the raw amino-acid sequence, 439 residues long: Xylose isomerase (439 aa).

Active-site residues include His101 and Asp104. Mg(2+)-binding residues include Glu232, Glu268, His271, Asp296, Asp307, Asp309, and Asp339.

It belongs to the xylose isomerase family. In terms of assembly, homotetramer. Requires Mg(2+) as cofactor.

It is found in the cytoplasm. It catalyses the reaction alpha-D-xylose = alpha-D-xylulofuranose. This is Xylose isomerase from Photobacterium profundum (strain SS9).